The primary structure comprises 535 residues: Ribonuclease Y (535 aa).

A helical transmembrane segment spans residues 30–50; the sequence is IWALPALVIGLAIGAGIGILI. Residues 225-285 form the KH domain; the sequence is TVSTVALPSE…VRREVARLAL (61 aa). In terms of domain architecture, HD spans 351-444; sequence VLQHSLECAL…VQAVDAISGG (94 aa).

The protein belongs to the RNase Y family.

The protein resides in the cell membrane. Its function is as follows. Endoribonuclease that initiates mRNA decay. The protein is Ribonuclease Y of Roseiflexus sp. (strain RS-1).